We begin with the raw amino-acid sequence, 264 residues long: Thymidylate synthase (264 aa).

Arg21 provides a ligand contact to dUMP. Position 51 (His51) interacts with (6R)-5,10-methylene-5,6,7,8-tetrahydrofolate. Residue 126 to 127 (RR) coordinates dUMP. The active-site Nucleophile is Cys146. DUMP is bound by residues 166 to 169 (RSAD), Asn177, and 207 to 209 (HLY). Asp169 provides a ligand contact to (6R)-5,10-methylene-5,6,7,8-tetrahydrofolate. Ala263 is a binding site for (6R)-5,10-methylene-5,6,7,8-tetrahydrofolate.

It belongs to the thymidylate synthase family. Bacterial-type ThyA subfamily. As to quaternary structure, homodimer.

Its subcellular location is the cytoplasm. It carries out the reaction dUMP + (6R)-5,10-methylene-5,6,7,8-tetrahydrofolate = 7,8-dihydrofolate + dTMP. The protein operates within pyrimidine metabolism; dTTP biosynthesis. Catalyzes the reductive methylation of 2'-deoxyuridine-5'-monophosphate (dUMP) to 2'-deoxythymidine-5'-monophosphate (dTMP) while utilizing 5,10-methylenetetrahydrofolate (mTHF) as the methyl donor and reductant in the reaction, yielding dihydrofolate (DHF) as a by-product. This enzymatic reaction provides an intracellular de novo source of dTMP, an essential precursor for DNA biosynthesis. The sequence is that of Thymidylate synthase from Chelativorans sp. (strain BNC1).